A 178-amino-acid polypeptide reads, in one-letter code: Major urinary protein 4 (178 aa).

Residues 1-16 (MKLLLCLGLTLVCIHA) form the signal peptide. The cysteines at positions 80 and 173 are disulfide-linked.

The protein belongs to the calycin superfamily. Lipocalin family. Expressed in lacrimal gland, parotid gland, sublingual gland, nasal mucus, and vomeronasal organ.

Its subcellular location is the secreted. Binds pheromones, likely to displace pheromones complexed to urinary MUPs and transport them to the vomeronasal organ (VNO) where they associate with their neuronal receptor(s). MUP4 is highly specific for the male mouse pheromone 2-sec-butyl-4,5-dihydrothiazole (SBT). This is Major urinary protein 4 (Mup4) from Mus musculus (Mouse).